A 125-amino-acid chain; its full sequence is DNA-directed RNA polymerase subunit omega (125 aa).

This sequence belongs to the RNA polymerase subunit omega family. In terms of assembly, the RNAP catalytic core consists of 2 alpha, 1 beta, 1 beta' and 1 omega subunit. When a sigma factor is associated with the core the holoenzyme is formed, which can initiate transcription.

It carries out the reaction RNA(n) + a ribonucleoside 5'-triphosphate = RNA(n+1) + diphosphate. In terms of biological role, promotes RNA polymerase assembly. Latches the N- and C-terminal regions of the beta' subunit thereby facilitating its interaction with the beta and alpha subunits. This chain is DNA-directed RNA polymerase subunit omega, found in Zymomonas mobilis subsp. mobilis (strain ATCC 31821 / ZM4 / CP4).